The chain runs to 314 residues: Serine protease 46 (314 aa).

The region spanning 44-281 is the Peptidase S1 domain; it reads VVNGKVVEVG…FTQWIKRQIG (238 aa). C69 and C85 form a disulfide bridge. Catalysis depends on charge relay system residues H84 and D130. 3 disulfide bridges follow: C164/C239, C197/C219, and C229/C257. The active-site Charge relay system is the S233. A helical membrane pass occupies residues 293–313; sequence FLSPFILTGYILLVSLGSLWL.

This sequence belongs to the peptidase S1 family.

The protein resides in the membrane. The protein is Serine protease 46 (Prss46) of Rattus norvegicus (Rat).